Consider the following 375-residue polypeptide: tRNA-specific 2-thiouridylase MnmA 3 (375 aa).

Residues 11-18 (GMSGGIDS) and Met37 contribute to the ATP site. Cys104 serves as the catalytic Nucleophile. Cys104 and Cys201 are disulfide-bonded. Gly128 serves as a coordination point for ATP. Residues 150–152 (KDQ) are interaction with tRNA. Cys201 (cysteine persulfide intermediate) is an active-site residue. Residues 309 to 310 (RY) are interaction with tRNA.

This sequence belongs to the MnmA/TRMU family.

Its subcellular location is the cytoplasm. The catalysed reaction is S-sulfanyl-L-cysteinyl-[protein] + uridine(34) in tRNA + AH2 + ATP = 2-thiouridine(34) in tRNA + L-cysteinyl-[protein] + A + AMP + diphosphate + H(+). In terms of biological role, catalyzes the 2-thiolation of uridine at the wobble position (U34) of tRNA, leading to the formation of s(2)U34. This is tRNA-specific 2-thiouridylase MnmA 3 from Phocaeicola vulgatus (strain ATCC 8482 / DSM 1447 / JCM 5826 / CCUG 4940 / NBRC 14291 / NCTC 11154) (Bacteroides vulgatus).